The primary structure comprises 156 residues: Zinc finger SWIM domain-containing protein 7 homolog (156 aa).

The segment at 82–120 (YMCLIQGDYCSCPSFNFSVLLKSDSVYCKHQISSILAEI) adopts an SWIM-type zinc-finger fold.

This sequence belongs to the SWS1 family.

It is found in the nucleus. Its function is as follows. May be involved in the homologous recombination repair (HRR) pathway of double-stranded DNA breaks arising during DNA replication or induced by DNA-damaging agents. The protein is Zinc finger SWIM domain-containing protein 7 homolog (zswim7) of Dictyostelium discoideum (Social amoeba).